A 166-amino-acid chain; its full sequence is Cytochrome c-type biogenesis protein CcmE (166 aa).

At 1 to 7 (MTRKQKR) the chain is on the cytoplasmic side. Residues 8-28 (LALIASGAVVVSLAVGLVMFA) traverse the membrane as a helical; Signal-anchor for type II membrane protein segment. Residues 29-166 (LRDNIVFFYS…QTAPQGAQAY (138 aa)) lie on the Periplasmic side of the membrane. Residues His-122 and Tyr-126 each contribute to the heme site. The disordered stretch occupies residues 139 to 166 (GVWQEEGKSEGKPSAIPAQTAPQGAQAY).

Belongs to the CcmE/CycJ family.

The protein resides in the cell inner membrane. Heme chaperone required for the biogenesis of c-type cytochromes. Transiently binds heme delivered by CcmC and transfers the heme to apo-cytochromes in a process facilitated by CcmF and CcmH. This chain is Cytochrome c-type biogenesis protein CcmE, found in Methylocella silvestris (strain DSM 15510 / CIP 108128 / LMG 27833 / NCIMB 13906 / BL2).